We begin with the raw amino-acid sequence, 887 residues long: Exocyst complex component SEC3A (887 aa).

2 coiled-coil regions span residues Ile221–Glu248 and Leu281–Gln301. The segment at Gly542 to Leu581 is disordered. The span at Asp555–Glu569 shows a compositional bias: acidic residues.

Belongs to the SEC3 family. The exocyst complex is composed of SEC3, SEC5, SEC6, SEC8, SEC10, EXO70A1 and EXO84B. Interacts with EXO70A1, SEC5A and ICR1, but not with ICR2. Binds to EXO70H1. Binds directly to B1L. As to expression, widely expressed. Preferentially expressed in tissues containing dividing and expanding cells, such as the shoot apical meristem, root tip, lateral root primordia and developing embryos.

Its subcellular location is the cytoplasm. The protein localises to the cytosol. It is found in the cell membrane. It localises to the cytoskeleton. The protein resides in the phragmoplast. Its subcellular location is the secreted. The protein localises to the extracellular exosome. Component of the exocyst complex involved in the docking of exocytic vesicles with fusion sites on the plasma membrane during regulated or polarized secretion. Involved in polarized cell growth and organ morphogenesis. During cytokinesis, involved in cell plate initiation, cell plate maturation and formation of new primary cell wall. During cytokinesis, involved in cell plate initiation, cell plate maturation and formation of new primary cell wall. The sequence is that of Exocyst complex component SEC3A from Arabidopsis thaliana (Mouse-ear cress).